The following is a 369-amino-acid chain: Peptidyl-prolyl cis-trans isomerase D (369 aa).

Residues 8–173 (YFDLSIGGKP…ADVRIDACGI (166 aa)) form the PPIase cyclophilin-type domain. TPR repeat units follow at residues 218 to 251 (VEAV…LQEY), 269 to 302 (VAVH…AADD), and 306 to 339 (AKAL…QPGD).

This sequence belongs to the cyclophilin-type PPIase family. PPIase D subfamily.

The protein resides in the cytoplasm. It carries out the reaction [protein]-peptidylproline (omega=180) = [protein]-peptidylproline (omega=0). Its function is as follows. PPIases accelerate the folding of proteins. It catalyzes the cis-trans isomerization of proline imidic peptide bonds in oligopeptides. The chain is Peptidyl-prolyl cis-trans isomerase D (CPR6) from Eremothecium gossypii (strain ATCC 10895 / CBS 109.51 / FGSC 9923 / NRRL Y-1056) (Yeast).